Reading from the N-terminus, the 183-residue chain is SAGA-associated factor 11 homolog (183 aa).

Residues 98–119 (CSCPNCNRIVAASRFAPHLEKC) form an SGF11-type zinc finger. Positions 140–167 (GGNYFGADEDDEDDADWSGEKRKKKIAP) are disordered. Positions 146 to 156 (ADEDDEDDADW) are enriched in acidic residues.

The protein belongs to the SGF11 family. Component of some SAGA transcription coactivator-HAT complexes. Within the SAGA complex, participates in a subcomplex of SAGA called the DUB module (deubiquitination module).

It localises to the nucleus. Functionally, component of the transcription regulatory histone acetylation (HAT) complex SAGA, a multiprotein complex that activates transcription by remodeling chromatin and mediating histone acetylation and deubiquitination. Within the SAGA complex, participates in a subcomplex that specifically deubiquitinates histone H2B. The SAGA complex is recruited to specific gene promoters by activators, where it is required for transcription. In Culex quinquefasciatus (Southern house mosquito), this protein is SAGA-associated factor 11 homolog.